Here is a 329-residue protein sequence, read N- to C-terminus: 4-hydroxythreonine-4-phosphate dehydrogenase (329 aa).

Residues His-136 and Thr-137 each coordinate substrate. Residues His-166, His-211, and His-266 each coordinate a divalent metal cation. Positions 274, 283, and 292 each coordinate substrate.

This sequence belongs to the PdxA family. In terms of assembly, homodimer. The cofactor is Zn(2+). Requires Mg(2+) as cofactor. Co(2+) serves as cofactor.

Its subcellular location is the cytoplasm. It catalyses the reaction 4-(phosphooxy)-L-threonine + NAD(+) = 3-amino-2-oxopropyl phosphate + CO2 + NADH. It functions in the pathway cofactor biosynthesis; pyridoxine 5'-phosphate biosynthesis; pyridoxine 5'-phosphate from D-erythrose 4-phosphate: step 4/5. In terms of biological role, catalyzes the NAD(P)-dependent oxidation of 4-(phosphooxy)-L-threonine (HTP) into 2-amino-3-oxo-4-(phosphooxy)butyric acid which spontaneously decarboxylates to form 3-amino-2-oxopropyl phosphate (AHAP). This Escherichia coli O6:H1 (strain CFT073 / ATCC 700928 / UPEC) protein is 4-hydroxythreonine-4-phosphate dehydrogenase.